A 183-amino-acid polypeptide reads, in one-letter code: Mast cell-expressed membrane protein 1 (183 aa).

Residues 1 to 26 (MHASASQDKNRRKPGHDEGAHNPDYE) form a disordered region. The Cytoplasmic segment spans residues 1-70 (MHASASQDKN…PPWLYRTIMM (70 aa)). The span at 15–24 (GHDEGAHNPD) shows a compositional bias: basic and acidic residues. A helical; Signal-anchor for type II membrane protein membrane pass occupies residues 71–91 (LYVLLALVFLSCIVLSALVLV). Residues 92 to 183 (KNSEMSKELW…EKKAQPQPST (92 aa)) lie on the Extracellular side of the membrane. Residue Asn-109 is glycosylated (N-linked (GlcNAc...) asparagine).

It localises to the membrane. This chain is Mast cell-expressed membrane protein 1, found in Mus musculus (Mouse).